Reading from the N-terminus, the 421-residue chain is Putative transporter AmpG 3 (421 aa).

12 consecutive transmembrane segments (helical) span residues 6–26, 41–61, 80–100, 104–124, 139–159, 166–186, 230–250, 274–294, 297–317, 324–344, 360–380, and 388–408; these read YLIG…LIFF, IIGA…WSPF, WALV…KRSP, LCIT…QDIV, LSIV…LGSV, IIFG…VGPI, LLLI…PMAM, LLIM…IGIF, VLIG…LATI, FIIT…IISI, AISA…GGIC, and VFFL…YTIY.

This sequence belongs to the major facilitator superfamily.

Its subcellular location is the cell inner membrane. This is Putative transporter AmpG 3 (ampG3) from Rickettsia prowazekii (strain Madrid E).